The following is a 340-amino-acid chain: Protein-arginine kinase (340 aa).

Residues 21 to 242 (VVLSSRIRLA…EQIIMQERIA (222 aa)) form the Phosphagen kinase C-terminal domain. ATP-binding positions include 24–28 (SSRIR), H79, R113, 164–168 (RASVM), and 195–200 (RGIYGE).

Belongs to the ATP:guanido phosphotransferase family.

It catalyses the reaction L-arginyl-[protein] + ATP = N(omega)-phospho-L-arginyl-[protein] + ADP + H(+). Functionally, catalyzes the specific phosphorylation of arginine residues in proteins. The protein is Protein-arginine kinase of Listeria monocytogenes serotype 4a (strain HCC23).